The sequence spans 335 residues: Anthranilate phosphoribosyltransferase 2 (335 aa).

5-phospho-alpha-D-ribose 1-diphosphate is bound by residues G70, 73–74 (GD), T78, 80–83 (NIST), 98–106 (KHGNRSASS), and S110. An anthranilate-binding site is contributed by G70. S82 lines the Mg(2+) pocket. Residue N101 coordinates anthranilate. Anthranilate is bound at residue R156. The Mg(2+) site is built by D215 and E216.

This sequence belongs to the anthranilate phosphoribosyltransferase family. In terms of assembly, homodimer. Mg(2+) serves as cofactor.

It catalyses the reaction N-(5-phospho-beta-D-ribosyl)anthranilate + diphosphate = 5-phospho-alpha-D-ribose 1-diphosphate + anthranilate. The protein operates within amino-acid biosynthesis; L-tryptophan biosynthesis; L-tryptophan from chorismate: step 2/5. Functionally, catalyzes the transfer of the phosphoribosyl group of 5-phosphorylribose-1-pyrophosphate (PRPP) to anthranilate to yield N-(5'-phosphoribosyl)-anthranilate (PRA). This Streptomyces coelicolor (strain ATCC BAA-471 / A3(2) / M145) protein is Anthranilate phosphoribosyltransferase 2.